The chain runs to 233 residues: Somatolactin (233 aa).

The signal sequence occupies residues 1-24; it reads MNMMQVMQSVVWAVLLWPCLVSLG. 3 cysteine pairs are disulfide-bonded: cysteine 29/cysteine 39, cysteine 89/cysteine 205, and cysteine 222/cysteine 230.

Belongs to the somatotropin/prolactin family. Pituitary gland.

Its subcellular location is the secreted. Its function is as follows. May be associated with ion regulation and reproduction. This is Somatolactin from Oncorhynchus keta (Chum salmon).